A 234-amino-acid chain; its full sequence is Membrane glycoprotein RL11 (234 aa).

Residues 1–23 form the signal peptide; it reads MQTYSTPLTLIIVTSLFLFTTQG. A helical membrane pass occupies residues 183 to 203; it reads LHCAWVSGLMIFVGALVICFL.

The protein localises to the host membrane. This chain is Membrane glycoprotein RL11 (RL11), found in Human cytomegalovirus (strain Merlin) (HHV-5).